The primary structure comprises 842 residues: Axin-1 (842 aa).

Residues 1-75 are disordered; it reads MSVKGKGFPL…LDLGYEPEGS (75 aa). Residues 34 to 46 show a composition bias toward polar residues; sequence TTDQRPFSHTYYS. The RGS domain maps to 88-211; it reads SLHSLLDDQD…LKSDIYLEYT (124 aa). Disordered stretches follow at residues 218–242, 277–297, 316–344, 414–451, 482–532, 543–562, 615–637, 656–675, and 729–754; these read PKNY…PTLN, SHCA…PGTW, TSAN…DGIP, KRVR…NSRY, KTPG…AKVD, YHHV…DGES, KKAD…EDSE, HKKS…TELA, and RLEE…KNVS. Positions 316 to 339 are enriched in polar residues; the sequence is TSANDSEQQSMSSDADTMSLTDSS. An interaction with GSK3B region spans residues 348–433; it reads LRKHYRREMQ…DGDVSSGPSV (86 aa). The interval 434–508 is interaction with beta-catenin; sequence ISHKLPSGPP…RSPDGHLSKT (75 aa). A compositionally biased stretch (basic residues) spans 543–552; it reads YHHVHHHGGV. Over residues 615 to 626 the composition is skewed to basic and acidic residues; sequence KKADLGKSESAS. The 83-residue stretch at 760-842 folds into the DIX domain; sequence CDNIVVAYYF…KIIGQVEKID (83 aa).

In terms of assembly, homodimer. Interacts with hwa; leading to promote the tankyrase-mediated degradation of axin1. In terms of processing, ADP-ribosylated by tankyrase tnks and tnks2. Poly-ADP-ribosylated protein is recognized by rnf146, followed by ubiquitination at 'Lys-48' and subsequent activation of the Wnt signaling pathway. Ubiquitinated by rnf146 when poly-ADP-ribosylated, leading to its degradation and subsequent activation of the Wnt signaling pathway.

It is found in the cytoplasm. It localises to the nucleus. Its subcellular location is the membrane. The protein localises to the cell membrane. Its function is as follows. Component of the beta-catenin destruction complex required for regulating ctnnb1 levels through phosphorylation and ubiquitination, and modulating Wnt-signaling. Controls dorsoventral patterning via two opposing effects; down-regulates ctnnb1 to inhibit the Wnt signaling pathway and ventralize embryos, but also dorsalizes embryos by activating a Wnt-independent JNK signaling pathway. The protein is Axin-1 (axin1) of Xenopus laevis (African clawed frog).